Here is a 94-residue protein sequence, read N- to C-terminus: Large ribosomal subunit protein uL23 (94 aa).

This sequence belongs to the universal ribosomal protein uL23 family. As to quaternary structure, part of the 50S ribosomal subunit. Contacts protein L29, and trigger factor when it is bound to the ribosome.

One of the early assembly proteins it binds 23S rRNA. One of the proteins that surrounds the polypeptide exit tunnel on the outside of the ribosome. Forms the main docking site for trigger factor binding to the ribosome. The protein is Large ribosomal subunit protein uL23 of Symbiobacterium thermophilum (strain DSM 24528 / JCM 14929 / IAM 14863 / T).